The primary structure comprises 368 residues: Flagellar P-ring protein 1 (368 aa).

The signal sequence occupies residues 1–24; that stretch reads MIFKQIRRLIAAALLAALSLPAAA.

This sequence belongs to the FlgI family. As to quaternary structure, the basal body constitutes a major portion of the flagellar organelle and consists of four rings (L,P,S, and M) mounted on a central rod.

Its subcellular location is the periplasm. The protein resides in the bacterial flagellum basal body. Functionally, assembles around the rod to form the L-ring and probably protects the motor/basal body from shearing forces during rotation. The chain is Flagellar P-ring protein 1 from Chromobacterium violaceum (strain ATCC 12472 / DSM 30191 / JCM 1249 / CCUG 213 / NBRC 12614 / NCIMB 9131 / NCTC 9757 / MK).